Here is a 626-residue protein sequence, read N- to C-terminus: Serine/threonine-protein kinase PknH (626 aa).

Topologically, residues 1 to 403 (MSDAQDSRVG…QTPRKTNPWP (403 aa)) are cytoplasmic. A Protein kinase domain is found at 16–276 (YHLKRLLGRG…DLALAAHEAL (261 aa)). ATP contacts are provided by residues 22-30 (LGRGGMGEV) and lysine 45. The Proton acceptor role is filled by aspartate 139. Residue threonine 170 is modified to Phosphothreonine. The interval 292–396 (QESTLPAPPK…GGPSPWAQTP (105 aa)) is disordered. 2 stretches are compositionally biased toward pro residues: residues 297–308 (PAPPKPVPPPTM) and 316–342 (RQPPAPPVTPPGVQPAPKPSYTPPAQP). A compositionally biased stretch (low complexity) spans 343–355 (GPAGQRPGPTGQP). A helical transmembrane segment spans residues 404 to 424 (LVAGAAAVVLVLVLGAIGIWI). Residues 425-626 (AIRPKPVQPP…AKIVDKVNKE (202 aa)) are Extracellular-facing. Disulfide bonds link cysteine 482–cysteine 545 and cysteine 587–cysteine 604.

This sequence belongs to the protein kinase superfamily. Ser/Thr protein kinase family. A divalent metal cation serves as cofactor. Post-translationally, autophosphorylated on threonine and serine residues. Dephosphorylated by PstP.

It is found in the cell membrane. The enzyme catalyses L-seryl-[protein] + ATP = O-phospho-L-seryl-[protein] + ADP + H(+). It catalyses the reaction L-threonyl-[protein] + ATP = O-phospho-L-threonyl-[protein] + ADP + H(+). May regulate bacterial growth in response to external signals to facilitate adaptation to the host environment. The protein is Serine/threonine-protein kinase PknH (pknH) of Mycobacterium tuberculosis (strain CDC 1551 / Oshkosh).